The following is a 70-amino-acid chain: Conotoxin Im23.4 (70 aa).

The signal sequence occupies residues 1–22 (MIMRMTLTLFVLVVMTAASASG). The propeptide occupies 23 to 30 (DALTEAKR). 3 disulfides stabilise this stretch: Cys34-Cys41, Cys45-Cys53, and Cys54-Cys69.

Belongs to the conotoxin K superfamily. As to expression, expressed by the venom duct.

It localises to the secreted. In terms of biological role, probable neurotoxin. The sequence is that of Conotoxin Im23.4 from Conus imperialis (Imperial cone).